Reading from the N-terminus, the 236-residue chain is tRNA (guanine-N(1)-)-methyltransferase (236 aa).

S-adenosyl-L-methionine is bound by residues glycine 116 and 136 to 141 (LGDFVL).

This sequence belongs to the RNA methyltransferase TrmD family. In terms of assembly, homodimer.

Its subcellular location is the cytoplasm. The enzyme catalyses guanosine(37) in tRNA + S-adenosyl-L-methionine = N(1)-methylguanosine(37) in tRNA + S-adenosyl-L-homocysteine + H(+). Functionally, specifically methylates guanosine-37 in various tRNAs. The sequence is that of tRNA (guanine-N(1)-)-methyltransferase from Thiobacillus denitrificans (strain ATCC 25259 / T1).